The sequence spans 599 residues: Elongation factor 4 (599 aa).

One can recognise a tr-type G domain in the interval 2-184 (KNIRNFSIIA…RLVRDIPPPE (183 aa)). GTP contacts are provided by residues 14 to 19 (DHGKST) and 131 to 134 (NKID).

It belongs to the TRAFAC class translation factor GTPase superfamily. Classic translation factor GTPase family. LepA subfamily.

It localises to the cell inner membrane. The enzyme catalyses GTP + H2O = GDP + phosphate + H(+). Required for accurate and efficient protein synthesis under certain stress conditions. May act as a fidelity factor of the translation reaction, by catalyzing a one-codon backward translocation of tRNAs on improperly translocated ribosomes. Back-translocation proceeds from a post-translocation (POST) complex to a pre-translocation (PRE) complex, thus giving elongation factor G a second chance to translocate the tRNAs correctly. Binds to ribosomes in a GTP-dependent manner. This chain is Elongation factor 4, found in Shigella dysenteriae serotype 1 (strain Sd197).